The sequence spans 552 residues: Glutamine-dependent NAD(+) synthetase (552 aa).

Residues 5-245 (FRITLAQLNP…EAVVHVDLER (241 aa)) form the CN hydrolase domain. E45 functions as the Proton acceptor; for glutaminase activity in the catalytic mechanism. Catalysis depends on K113, which acts as the For glutaminase activity. The Nucleophile; for glutaminase activity role is filled by C149. L-glutamine is bound by residues S175 and K181. Positions 275 to 552 (LQDYLRKSGF…PMVNRWRDQS (278 aa)) are ligase. 290–297 (GLSGGIDS) serves as a coordination point for ATP. N373 is a deamido-NAD(+) binding site. T397 is a binding site for ATP. Residues E402 and K521 each contribute to the deamido-NAD(+) site.

This sequence in the C-terminal section; belongs to the NAD synthetase family.

It catalyses the reaction deamido-NAD(+) + L-glutamine + ATP + H2O = L-glutamate + AMP + diphosphate + NAD(+) + H(+). Its pathway is cofactor biosynthesis; NAD(+) biosynthesis; NAD(+) from deamido-NAD(+) (L-Gln route): step 1/1. Functionally, catalyzes the ATP-dependent amidation of deamido-NAD to form NAD. Uses L-glutamine as a nitrogen source. The chain is Glutamine-dependent NAD(+) synthetase from Rhodobacter capsulatus (Rhodopseudomonas capsulata).